Here is a 180-residue protein sequence, read N- to C-terminus: Large ribosomal subunit protein uL6 (180 aa).

This sequence belongs to the universal ribosomal protein uL6 family. As to quaternary structure, part of the 50S ribosomal subunit.

In terms of biological role, this protein binds to the 23S rRNA, and is important in its secondary structure. It is located near the subunit interface in the base of the L7/L12 stalk, and near the tRNA binding site of the peptidyltransferase center. This Borrelia recurrentis (strain A1) protein is Large ribosomal subunit protein uL6.